We begin with the raw amino-acid sequence, 467 residues long: ATP synthase subunit beta 1 (467 aa).

Gly-150–Thr-157 provides a ligand contact to ATP.

It belongs to the ATPase alpha/beta chains family. F-type ATPases have 2 components, CF(1) - the catalytic core - and CF(0) - the membrane proton channel. CF(1) has five subunits: alpha(3), beta(3), gamma(1), delta(1), epsilon(1). CF(0) has three main subunits: a(1), b(2) and c(9-12). The alpha and beta chains form an alternating ring which encloses part of the gamma chain. CF(1) is attached to CF(0) by a central stalk formed by the gamma and epsilon chains, while a peripheral stalk is formed by the delta and b chains.

The protein localises to the cell inner membrane. It catalyses the reaction ATP + H2O + 4 H(+)(in) = ADP + phosphate + 5 H(+)(out). Its function is as follows. Produces ATP from ADP in the presence of a proton gradient across the membrane. The catalytic sites are hosted primarily by the beta subunits. The protein is ATP synthase subunit beta 1 of Vibrio campbellii (strain ATCC BAA-1116).